The primary structure comprises 272 residues: MIKTKIMGILNVTPDSFSDGGQYHSVDQAVKRAKEMIDEGVDIIDVGGVSTRPGHKEVSHKEVSLKEEMNRVLPVVESIVKYDVQISVDTFRSEVAEACLKLGVSMINDQWAGLFDSNMFNVVSQYGAEIVLMHNGDGHRDKPVVEEMLVSLLAQANKAELAGIPHNKIWLDPGIGFAKTREEENEVMARLDELVATEYPVLLATSRKRYIKEMMNQDSSPSDRDEATAATTAYGIMKGVRGVRVHNVLLNTRLAQSMDFLKENEYERHHLS.

A Pterin-binding domain is found at 1–251 (MIKTKIMGIL…GVRVHNVLLN (251 aa)). Asparagine 11 lines the Mg(2+) pocket. Residues threonine 51, aspartate 89, asparagine 108, aspartate 172, lysine 208, and 244–246 (RVH) contribute to the (7,8-dihydropterin-6-yl)methyl diphosphate site.

Belongs to the DHPS family. As to quaternary structure, homodimer. It depends on Mg(2+) as a cofactor.

The catalysed reaction is (7,8-dihydropterin-6-yl)methyl diphosphate + 4-aminobenzoate = 7,8-dihydropteroate + diphosphate. It functions in the pathway cofactor biosynthesis; tetrahydrofolate biosynthesis; 7,8-dihydrofolate from 2-amino-4-hydroxy-6-hydroxymethyl-7,8-dihydropteridine diphosphate and 4-aminobenzoate: step 1/2. Its function is as follows. Catalyzes the condensation of para-aminobenzoate (pABA) with 6-hydroxymethyl-7,8-dihydropterin diphosphate (DHPt-PP) to form 7,8-dihydropteroate (H2Pte), the immediate precursor of folate derivatives. The polypeptide is Dihydropteroate synthase (folP) (Staphylococcus epidermidis (strain ATCC 35984 / DSM 28319 / BCRC 17069 / CCUG 31568 / BM 3577 / RP62A)).